The chain runs to 236 residues: MATPHINAQPGDFAETVLMPGDPLRAKYIAETFLEDVKQVCDVRSMFGFTGTYKGKKVSVMGHGMGIPSCSIYVHELIAEYGVKNIIRIGSCGAVRDDVKLMDVVIGMGASTDSKVNRIRFSGHDFAAIADYDLLETAVNQARAQQVPVKVGNVFSADLFYTPEPEIFEKMKKLGILGVDMEAAGIYGVAADLGARALTILTVSDHILRGEKLSSEDRQKSFNDMMKVALETAINI.

Histidine 5 contacts a purine D-ribonucleoside. Residues glycine 21, arginine 25, arginine 44, and 88-91 contribute to the phosphate site; that span reads RIGS. Residues 180 to 182 and 204 to 205 each bind a purine D-ribonucleoside; these read DME and SD. The Proton donor role is filled by aspartate 205.

The protein belongs to the PNP/UDP phosphorylase family. In terms of assembly, homohexamer; trimer of homodimers.

The catalysed reaction is a purine D-ribonucleoside + phosphate = a purine nucleobase + alpha-D-ribose 1-phosphate. The enzyme catalyses a purine 2'-deoxy-D-ribonucleoside + phosphate = a purine nucleobase + 2-deoxy-alpha-D-ribose 1-phosphate. Catalyzes the reversible phosphorolytic breakdown of the N-glycosidic bond in the beta-(deoxy)ribonucleoside molecules, with the formation of the corresponding free purine bases and pentose-1-phosphate. The sequence is that of Purine nucleoside phosphorylase DeoD-type 2 from Vibrio cholerae serotype O1 (strain ATCC 39315 / El Tor Inaba N16961).